The following is a 132-amino-acid chain: MVMTDPIADFLTRIRNANQAKHEVLEVPASNIKKGIADILKREGFVKNVEVIEDDKQGIIRVFLKYGQNGERVITNLKRISKPGLRVYTKHEDMPKVLNGLGIAIVSTSEGLLTDKEARQKNIGGEVLAYIW.

Belongs to the universal ribosomal protein uS8 family. Part of the 30S ribosomal subunit. Contacts proteins S5 and S12.

Functionally, one of the primary rRNA binding proteins, it binds directly to 16S rRNA central domain where it helps coordinate assembly of the platform of the 30S subunit. This is Small ribosomal subunit protein uS8 from Streptococcus agalactiae serotype V (strain ATCC BAA-611 / 2603 V/R).